A 172-amino-acid polypeptide reads, in one-letter code: Crossover junction endodeoxyribonuclease RuvC (172 aa).

Active-site residues include Asp-12, Glu-71, and Asp-143. Mg(2+) is bound by residues Asp-12, Glu-71, and Asp-143.

Belongs to the RuvC family. In terms of assembly, homodimer which binds Holliday junction (HJ) DNA. The HJ becomes 2-fold symmetrical on binding to RuvC with unstacked arms; it has a different conformation from HJ DNA in complex with RuvA. In the full resolvosome a probable DNA-RuvA(4)-RuvB(12)-RuvC(2) complex forms which resolves the HJ. Requires Mg(2+) as cofactor.

Its subcellular location is the cytoplasm. The enzyme catalyses Endonucleolytic cleavage at a junction such as a reciprocal single-stranded crossover between two homologous DNA duplexes (Holliday junction).. In terms of biological role, the RuvA-RuvB-RuvC complex processes Holliday junction (HJ) DNA during genetic recombination and DNA repair. Endonuclease that resolves HJ intermediates. Cleaves cruciform DNA by making single-stranded nicks across the HJ at symmetrical positions within the homologous arms, yielding a 5'-phosphate and a 3'-hydroxyl group; requires a central core of homology in the junction. The consensus cleavage sequence is 5'-(A/T)TT(C/G)-3'. Cleavage occurs on the 3'-side of the TT dinucleotide at the point of strand exchange. HJ branch migration catalyzed by RuvA-RuvB allows RuvC to scan DNA until it finds its consensus sequence, where it cleaves and resolves the cruciform DNA. In Coxiella burnetii (strain CbuK_Q154) (Coxiella burnetii (strain Q154)), this protein is Crossover junction endodeoxyribonuclease RuvC.